A 906-amino-acid chain; its full sequence is Cadherin-2 (906 aa).

A signal peptide spans 1 to 25; that stretch reads MCRIAGAPRTLLPLLAALLQASVEA. A propeptide spanning residues 26-159 is cleaved from the precursor; it reads SGEIALCKTG…HSGALQRQKR (134 aa). Cadherin domains are found at residues 160–267, 268–382, 383–497, 498–603, and 604–717; these read DWVI…RPEF, LHQV…PPEF, TAMT…NPYF, APNP…DNAP, and QVLP…RIVG. At 160-724 the chain is on the extracellular side; the sequence is DWVIPPINLP…IVGAGLGTGA (565 aa). Glu170 is a binding site for Ca(2+). Asn190 carries an N-linked (GlcNAc...) asparagine glycan. 7 residues coordinate Ca(2+): Asp226, Glu228, Asp259, Met260, Asn261, Asp262, and Asn263. Asn273 carries N-linked (GlcNAc...) asparagine glycosylation. Ca(2+) is bound by residues Asp293, Asp295, and Asn301. Asn325 carries an N-linked (GlcNAc...) asparagine glycan. Asp353 is a binding site for Ca(2+). 4 N-linked (GlcNAc...) asparagine glycosylation sites follow: Asn402, Asn572, Asn651, and Asn692. A helical membrane pass occupies residues 725–745; that stretch reads IIAILLCIIILLILVLMFVVW. The Cytoplasmic portion of the chain corresponds to 746 to 906; the sequence is MKRRDKERQA…LADMYGGGDD (161 aa). Positions 863-880 are enriched in low complexity; the sequence is SGSTAGSLSSLNSSSSGG. The disordered stretch occupies residues 863–883; that stretch reads SGSTAGSLSSLNSSSSGGDQD.

In terms of assembly, homodimer (via extracellular region). Can also form heterodimers with other cadherins (via extracellular region). Dimerization occurs in trans, i.e. with a cadherin chain from another cell. Interacts with CDCP1. Interacts with PCDH8; this complex may also include TAOK2. The interaction with PCDH8 may lead to internalization through TAOK2/p38 MAPK pathway. Identified in a complex containing FGFR4, NCAM1, CDH2, PLCG1, FRS2, SRC, SHC1, GAP43 and CTTN. May interact with OBSCN (via protein kinase domain 2). Interacts with FBXO45. Cleaved by MMP24. Ectodomain cleavage leads to the generation of a soluble 90 kDa N-terminal soluble fragment and a 45 kDa membrane-bound C-terminal fragment 1 (CTF1), which is further cleaved by gamma-secretase into a 35 kDa. Cleavage in neural stem cells by MMP24 affects CDH2-mediated anchorage of neural stem cells to ependymocytes in the adult subependymal zone, leading to modulate neural stem cell quiescence. In terms of processing, may be phosphorylated by OBSCN. Post-translationally, O-glycosylated on Ser and Thr residues. In terms of tissue distribution, expressed in cardiac muscle (at protein level).

Its subcellular location is the cell membrane. It localises to the sarcolemma. The protein localises to the cell junction. It is found in the adherens junction. The protein resides in the desmosome. Its subcellular location is the cell surface. Calcium-dependent cell adhesion protein; preferentially mediates homotypic cell-cell adhesion by dimerization with a CDH2 chain from another cell. Cadherins may thus contribute to the sorting of heterogeneous cell types. Acts as a regulator of neural stem cells quiescence by mediating anchorage of neural stem cells to ependymocytes in the adult subependymal zone: upon cleavage by MMP24, CDH2-mediated anchorage is affected, leading to modulate neural stem cell quiescence. Plays a role in cell-to-cell junction formation between pancreatic beta cells and neural crest stem (NCS) cells, promoting the formation of processes by NCS cells. Required for proper neurite branching. Required for pre- and postsynaptic organization. CDH2 may be involved in neuronal recognition mechanism. In hippocampal neurons, may regulate dendritic spine density. The protein is Cadherin-2 (Cdh2) of Mus musculus (Mouse).